Reading from the N-terminus, the 380-residue chain is Cytochrome b (380 aa).

Transmembrane regions (helical) follow at residues 34–54, 78–99, 114–134, and 179–199; these read FGSL…LLAT, WLIR…YLHI, WNTG…GYVL, and FFAL…IHLT. The heme b site is built by His-84 and His-98. Heme b is bound by residues His-183 and His-197. A ubiquinone is bound at residue His-202. Transmembrane regions (helical) follow at residues 227-247, 289-309, 321-341, and 348-368; these read LKDI…ALFS, LGGV…PLLH, LSQL…WVGS, and FIII…LLFP.

This sequence belongs to the cytochrome b family. In terms of assembly, the cytochrome bc1 complex contains 11 subunits: 3 respiratory subunits (MT-CYB, CYC1 and UQCRFS1), 2 core proteins (UQCRC1 and UQCRC2) and 6 low-molecular weight proteins (UQCRH/QCR6, UQCRB/QCR7, UQCRQ/QCR8, UQCR10/QCR9, UQCR11/QCR10 and a cleavage product of UQCRFS1). This cytochrome bc1 complex then forms a dimer. Heme b is required as a cofactor.

Its subcellular location is the mitochondrion inner membrane. Its function is as follows. Component of the ubiquinol-cytochrome c reductase complex (complex III or cytochrome b-c1 complex) that is part of the mitochondrial respiratory chain. The b-c1 complex mediates electron transfer from ubiquinol to cytochrome c. Contributes to the generation of a proton gradient across the mitochondrial membrane that is then used for ATP synthesis. The sequence is that of Cytochrome b (MT-CYB) from Uria lomvia (Thick-billed murre).